The chain runs to 447 residues: UDP-N-acetylmuramate--L-alanine ligase (447 aa).

108–114 (GSHGKTS) contacts ATP.

Belongs to the MurCDEF family.

It localises to the cytoplasm. It carries out the reaction UDP-N-acetyl-alpha-D-muramate + L-alanine + ATP = UDP-N-acetyl-alpha-D-muramoyl-L-alanine + ADP + phosphate + H(+). Its pathway is cell wall biogenesis; peptidoglycan biosynthesis. In terms of biological role, cell wall formation. The protein is UDP-N-acetylmuramate--L-alanine ligase of Listeria monocytogenes serovar 1/2a (strain ATCC BAA-679 / EGD-e).